The chain runs to 661 residues: MEGPAFSKSPKDKTIERAFLGVLGILFVTGGLASRDNPHQVYNITWEVTNGEQDTVWAVTGNHPLWTWWPDLTPDLCMLALHGPTHWGLDNHPPYSSPPGPPCCSGDAGAVSGCARDCDEPLTSYSPRCNTAWNRLKLARVTHAPKEGFYICPGSHRPRWARSCGGLDAYYCASWGCETTGRAAWNPTSSWDYITVSNNLTSSQATKACKNNGWCNPLVIRFTGPGKRATSWTTGHFWGLRLYISGHDPGLTFGIRLKVTDLGPRVPIGPNPVLSDQRPPSRPVPARPPPPSASPSTPTIPPQQGTGDRLLNLVQGAYLTLNMTDPTRTQECWLCLVSEPPYYEGVAVLREYTSHETAPANCSSGSQHKLTLSEVTGQGRCLGTVPKTHQALCNRTEPTVSGSNYLVAPEGTLWACSTGLTPCLSTTVLNLTTDYCVLVELWPKVTYHSPDYVYTQFEPGARFRREPVSLTLALLPEGLTMGGIAAGVGTGTTALVATQQFQQLQAAMHNDLKEVEKSITNLEKSLTSLSEVVLQNRRGLDLLFLKEGGLCAALKEECCFYADHTGLVRDSMAKLRERLNQRQKLFESGQGWFEGLFNRSPWFTTLISTIMGPLIVLLLILLFGPCILNRLVQFVKDRISVVQALVLTQQYHQLKPIEYEP.

Residues 1–33 (MEGPAFSKSPKDKTIERAFLGVLGILFVTGGLA) form the signal peptide. Positions 32–267 (LASRDNPHQV…KVTDLGPRVP (236 aa)) are receptor-binding domain (RBD). The Extracellular segment spans residues 34 to 606 (SRDNPHQVYN…FNRSPWFTTL (573 aa)). An N-linked (GlcNAc...) asparagine; by host glycan is attached at Asn43. Cystine bridges form between Cys77/Cys129, Cys103/Cys118, Cys104/Cys114, Cys152/Cys172, and Cys164/Cys177. Residue His86 coordinates Zn(2+). Asp117 provides a ligand contact to Zn(2+). Asn199 carries an N-linked (GlcNAc...) asparagine; by host glycan. Cys209 and Cys215 form a disulfide bridge. Residues 268 to 308 (IGPNPVLSDQRPPSRPVPARPPPPSASPSTPTIPPQQGTGD) form a disordered region. Residues 280 to 301 (PSRPVPARPPPPSASPSTPTIP) are compositionally biased toward pro residues. Asn322 carries an N-linked (GlcNAc...) asparagine; by host glycan. 6 cysteine pairs are disulfide-bonded: Cys332–Cys335, Cys332–Cys559, Cys362–Cys416, Cys381–Cys393, Cys423–Cys436, and Cys551–Cys558. Residues 332-335 (CWLC) carry the CXXC motif. An N-linked (GlcNAc...) asparagine; by host glycan is attached at Asn361. N-linked (GlcNAc...) asparagine; by host glycans are attached at residues Asn394 and Asn430. Residues 468-488 (VSLTLALLPEGLTMGGIAAGV) are fusion peptide. Positions 497 to 533 (ATQQFQQLQAAMHNDLKEVEKSITNLEKSLTSLSEVV) form a coiled coil. Positions 534–550 (LQNRRGLDLLFLKEGGL) are immunosuppression. Positions 551 to 559 (CAALKEECC) match the CX6CC motif. Residues 607-627 (ISTIMGPLIVLLLILLFGPCI) traverse the membrane as a helical segment. Cys626 carries the S-palmitoyl cysteine; by host lipid modification. Over 628–661 (LNRLVQFVKDRISVVQALVLTQQYHQLKPIEYEP) the chain is Cytoplasmic. Residues 651 to 654 (YHQL) carry the YXXL motif; contains endocytosis signal motif.

The mature envelope protein (Env) consists of a trimer of SU-TM heterodimers attached by a labile interchain disulfide bond. In terms of processing, specific enzymatic cleavages in vivo yield mature proteins. Envelope glycoproteins are synthesized as an inactive precursor that is N-glycosylated and processed likely by host cell furin or by a furin-like protease in the Golgi to yield the mature SU and TM proteins. The cleavage site between SU and TM requires the minimal sequence [KR]-X-[KR]-R. The R-peptide is released from the C-terminus of the cytoplasmic tail of the TM protein upon particle formation as a result of proteolytic cleavage by the viral protease. Cleavage of this peptide is required for TM to become fusogenic. Post-translationally, the CXXC motif is highly conserved across a broad range of retroviral envelope proteins. It is thought to participate in the formation of a labile disulfide bond possibly with the CX6CC motif present in the transmembrane protein. Isomerization of the intersubunit disulfide bond to an SU intrachain disulfide bond is thought to occur upon receptor recognition in order to allow membrane fusion. The transmembrane protein is palmitoylated. In terms of processing, the R-peptide is palmitoylated.

It localises to the virion membrane. The protein localises to the host cell membrane. In terms of biological role, the surface protein (SU) attaches the virus to the host cell by binding to its receptor. This interaction triggers the refolding of the transmembrane protein (TM) and is thought to activate its fusogenic potential by unmasking its fusion peptide. Fusion occurs at the host cell plasma membrane. Functionally, the transmembrane protein (TM) acts as a class I viral fusion protein. Under the current model, the protein has at least 3 conformational states: pre-fusion native state, pre-hairpin intermediate state, and post-fusion hairpin state. During viral and target cell membrane fusion, the coiled coil regions (heptad repeats) assume a trimer-of-hairpins structure, positioning the fusion peptide in close proximity to the C-terminal region of the ectodomain. The formation of this structure appears to drive apposition and subsequent fusion of viral and target cell membranes. Membranes fusion leads to delivery of the nucleocapsid into the cytoplasm. This chain is Envelope glycoprotein (env), found in Mus musculus (Mouse).